A 96-amino-acid chain; its full sequence is Large ribosomal subunit protein bL25 (96 aa).

This sequence belongs to the bacterial ribosomal protein bL25 family. As to quaternary structure, part of the 50S ribosomal subunit; part of the 5S rRNA/L5/L18/L25 subcomplex. Contacts the 5S rRNA. Binds to the 5S rRNA independently of L5 and L18.

Functionally, this is one of the proteins that binds to the 5S RNA in the ribosome where it forms part of the central protuberance. This is Large ribosomal subunit protein bL25 from Francisella tularensis subsp. holarctica (strain FTNF002-00 / FTA).